The following is a 355-amino-acid chain: Neutral protease 2 homolog MEP6 (355 aa).

The first 19 residues, 1 to 19 (MRLSSSLIALVALAGQALA), serve as a signal peptide directing secretion. A propeptide spanning residues 20–179 (LPFNELAERD…ASAIPELNKR (160 aa)) is cleaved from the precursor. 2 cysteine pairs are disulfide-bonded: cysteine 187–cysteine 259 and cysteine 266–cysteine 283. Residue histidine 307 coordinates Zn(2+). Residue glutamate 308 is part of the active site. 2 residues coordinate Zn(2+): histidine 311 and aspartate 322.

It belongs to the peptidase M35 family. It depends on Zn(2+) as a cofactor.

Its subcellular location is the secreted. The enzyme catalyses Preferential cleavage of bonds with hydrophobic residues in P1'. Also 3-Asn-|-Gln-4 and 8-Gly-|-Ser-9 bonds in insulin B chain.. In terms of biological role, secreted metalloproteinase that allows assimilation of proteinaceous substrates. Shows high activities on basic nuclear substrates such as histone and protamine. May be involved in virulence. The polypeptide is Neutral protease 2 homolog MEP6 (MEP6) (Coccidioides posadasii (strain C735) (Valley fever fungus)).